The chain runs to 427 residues: UDP-N-acetylglucosamine--N-acetylmuramyl-(pentapeptide) pyrophosphoryl-undecaprenol N-acetylglucosamine transferase (427 aa).

Residues 29 to 31 (TGG), Asn141, Arg177, Ser205, Ile258, and Gln303 each bind UDP-N-acetyl-alpha-D-glucosamine. Residues 408–427 (SLHPIPDSRFPIRTSAGGAQ) are disordered.

It belongs to the glycosyltransferase 28 family. MurG subfamily.

Its subcellular location is the cell inner membrane. The catalysed reaction is di-trans,octa-cis-undecaprenyl diphospho-N-acetyl-alpha-D-muramoyl-L-alanyl-D-glutamyl-meso-2,6-diaminopimeloyl-D-alanyl-D-alanine + UDP-N-acetyl-alpha-D-glucosamine = di-trans,octa-cis-undecaprenyl diphospho-[N-acetyl-alpha-D-glucosaminyl-(1-&gt;4)]-N-acetyl-alpha-D-muramoyl-L-alanyl-D-glutamyl-meso-2,6-diaminopimeloyl-D-alanyl-D-alanine + UDP + H(+). The protein operates within cell wall biogenesis; peptidoglycan biosynthesis. In terms of biological role, cell wall formation. Catalyzes the transfer of a GlcNAc subunit on undecaprenyl-pyrophosphoryl-MurNAc-pentapeptide (lipid intermediate I) to form undecaprenyl-pyrophosphoryl-MurNAc-(pentapeptide)GlcNAc (lipid intermediate II). The chain is UDP-N-acetylglucosamine--N-acetylmuramyl-(pentapeptide) pyrophosphoryl-undecaprenol N-acetylglucosamine transferase from Xanthomonas campestris pv. campestris (strain B100).